The primary structure comprises 263 residues: uncharacterized protein (263 aa).

This sequence belongs to the AtsA family.

The protein localises to the plastid. It is found in the chloroplast. This is an uncharacterized protein from Pyropia yezoensis (Susabi-nori).